We begin with the raw amino-acid sequence, 142 residues long: Large ribosomal subunit protein uL11 (142 aa).

The protein belongs to the universal ribosomal protein uL11 family. Part of the ribosomal stalk of the 50S ribosomal subunit. Interacts with L10 and the large rRNA to form the base of the stalk. L10 forms an elongated spine to which L12 dimers bind in a sequential fashion forming a multimeric L10(L12)X complex. In terms of processing, one or more lysine residues are methylated.

Functionally, forms part of the ribosomal stalk which helps the ribosome interact with GTP-bound translation factors. This Klebsiella pneumoniae subsp. pneumoniae (strain ATCC 700721 / MGH 78578) protein is Large ribosomal subunit protein uL11.